Consider the following 387-residue polypeptide: Oxidase FUB9 (387 aa).

The interval 1 to 20 (MSRTNLPIQPAKMSDATSSK) is disordered. An FMN hydroxy acid dehydrogenase domain is found at 18-379 (SSKPQIFSIQ…TPAHLSILNA (362 aa)). Tyr-44 is an a 2-oxocarboxylate binding site. FMN-binding residues include Ser-126, Gln-150, and Thr-178. Arg-187 is a binding site for a 2-oxocarboxylate. Lys-250 serves as a coordination point for FMN. The Proton acceptor role is filled by His-274. Arg-277 serves as a coordination point for a 2-oxocarboxylate. FMN contacts are provided by residues 305–309 (DGGFR) and 328–329 (GR).

The protein belongs to the FMN-dependent alpha-hydroxy acid dehydrogenase family. FMN serves as cofactor.

The protein operates within mycotoxin biosynthesis. Its function is as follows. Oxidase; part of the gene cluster that mediates the biosynthesis of fusaric acid, a mycotoxin with low to moderate toxicity to animals and humans, but with high phytotoxic properties. L-aspartate is suggested as fusaric acid amino acid precursor that is activated and further processed to O-acetyl-L-homoserine by cluster enzymes aspartate kinase FUB3 and homoserine O-acetyltransferase FUB5, as well as enzymes of the primary metabolism. The polyketide synthase (PKS) FUB1 generates the triketide trans-2-hexenal which is presumptively released by the hydrolase FUB4 and linked to the NRPS-bound amino acid precursor by NAD(P)-dependent dehydrogenase FUB6. FUB1, FUB4, and the non-canonical NRPS Fub8 may form an enzyme complex. Further processing of the NRPS-bound intermediate might be carried out by FUB6 and the sulfhydrylase FUB7, enabling a spontaneous electrocyclization to close the carbon backbone of fusaric acid. Dihydrofusaric acid is likely to be released via reduction by the thioester reductase (TR) domain of FUB8 whereupon the final oxidation to fusaric acid may (also) be performed by the FMN-dependent dehydrogenase FUB9. In Fusarium oxysporum f. sp. lycopersici (strain 4287 / CBS 123668 / FGSC 9935 / NRRL 34936) (Fusarium vascular wilt of tomato), this protein is Oxidase FUB9.